The following is a 156-amino-acid chain: Ribosomal RNA large subunit methyltransferase H (156 aa).

S-adenosyl-L-methionine-binding positions include leucine 73, glycine 104, and 123–128; that span reads IGPLTL.

The protein belongs to the RNA methyltransferase RlmH family. As to quaternary structure, homodimer.

It is found in the cytoplasm. It catalyses the reaction pseudouridine(1915) in 23S rRNA + S-adenosyl-L-methionine = N(3)-methylpseudouridine(1915) in 23S rRNA + S-adenosyl-L-homocysteine + H(+). Specifically methylates the pseudouridine at position 1915 (m3Psi1915) in 23S rRNA. The chain is Ribosomal RNA large subunit methyltransferase H from Xanthomonas axonopodis pv. citri (strain 306).